The following is a 178-amino-acid chain: Large ribosomal subunit protein uL6 (178 aa).

It belongs to the universal ribosomal protein uL6 family. Part of the 50S ribosomal subunit.

Its function is as follows. This protein binds to the 23S rRNA, and is important in its secondary structure. It is located near the subunit interface in the base of the L7/L12 stalk, and near the tRNA binding site of the peptidyltransferase center. This is Large ribosomal subunit protein uL6 from Tropheryma whipplei (strain TW08/27) (Whipple's bacillus).